Reading from the N-terminus, the 507-residue chain is ATP synthase subunit alpha, chloroplastic (507 aa).

170–177 (GDRQTGKT) serves as a coordination point for ATP. Residue Thr257 is modified to Phosphothreonine.

It belongs to the ATPase alpha/beta chains family. As to quaternary structure, F-type ATPases have 2 components, CF(1) - the catalytic core - and CF(0) - the membrane proton channel. CF(1) has five subunits: alpha(3), beta(3), gamma(1), delta(1), epsilon(1). CF(0) has four main subunits: a, b, b' and c.

It is found in the plastid. Its subcellular location is the chloroplast thylakoid membrane. It carries out the reaction ATP + H2O + 4 H(+)(in) = ADP + phosphate + 5 H(+)(out). Produces ATP from ADP in the presence of a proton gradient across the membrane. The alpha chain is a regulatory subunit. The polypeptide is ATP synthase subunit alpha, chloroplastic (Crucihimalaya wallichii (Rock-cress)).